Consider the following 750-residue polypeptide: Photosystem I P700 chlorophyll a apoprotein A1 (750 aa).

8 consecutive transmembrane segments (helical) span residues 70–93 (VFSA…FHGA), 156–179 (LYCT…FHYH), 195–219 (LNHH…HVSL), 291–309 (IAHH…GHMY), 346–369 (WHAQ…HHMY), 385–411 (LSLF…IFMV), 433–455 (AIIS…LYIH), and 531–549 (FLVH…LILL). [4Fe-4S] cluster contacts are provided by cysteine 573 and cysteine 582. 2 helical membrane passes run 589-610 (HVFL…HFSW) and 664-686 (LSAY…MFLF). Histidine 675 provides a ligand contact to chlorophyll a'. Methionine 683 and tyrosine 691 together coordinate chlorophyll a. Phylloquinone is bound at residue tryptophan 692. A helical membrane pass occupies residues 724 to 744 (AVGVTHYLLGGIATTWAFFLA).

It belongs to the PsaA/PsaB family. As to quaternary structure, the PsaA/B heterodimer binds the P700 chlorophyll special pair and subsequent electron acceptors. PSI consists of a core antenna complex that captures photons, and an electron transfer chain that converts photonic excitation into a charge separation. The eukaryotic PSI reaction center is composed of at least 11 subunits. P700 is a chlorophyll a/chlorophyll a' dimer, A0 is one or more chlorophyll a, A1 is one or both phylloquinones and FX is a shared 4Fe-4S iron-sulfur center. is required as a cofactor.

It localises to the plastid. The protein localises to the chloroplast thylakoid membrane. The enzyme catalyses reduced [plastocyanin] + hnu + oxidized [2Fe-2S]-[ferredoxin] = oxidized [plastocyanin] + reduced [2Fe-2S]-[ferredoxin]. In terms of biological role, psaA and PsaB bind P700, the primary electron donor of photosystem I (PSI), as well as the electron acceptors A0, A1 and FX. PSI is a plastocyanin-ferredoxin oxidoreductase, converting photonic excitation into a charge separation, which transfers an electron from the donor P700 chlorophyll pair to the spectroscopically characterized acceptors A0, A1, FX, FA and FB in turn. Oxidized P700 is reduced on the lumenal side of the thylakoid membrane by plastocyanin. The polypeptide is Photosystem I P700 chlorophyll a apoprotein A1 (Draba nemorosa (Woodland whitlowgrass)).